Reading from the N-terminus, the 100-residue chain is NADH-quinone oxidoreductase subunit K (100 aa).

Transmembrane regions (helical) follow at residues 4-24, 29-49, and 60-80; these read LSNY…GVLT, IVVF…FVAF, and IFVF…LALF.

The protein belongs to the complex I subunit 4L family. In terms of assembly, NDH-1 is composed of 14 different subunits. Subunits NuoA, H, J, K, L, M, N constitute the membrane sector of the complex.

Its subcellular location is the cell inner membrane. It catalyses the reaction a quinone + NADH + 5 H(+)(in) = a quinol + NAD(+) + 4 H(+)(out). In terms of biological role, NDH-1 shuttles electrons from NADH, via FMN and iron-sulfur (Fe-S) centers, to quinones in the respiratory chain. The immediate electron acceptor for the enzyme in this species is believed to be ubiquinone. Couples the redox reaction to proton translocation (for every two electrons transferred, four hydrogen ions are translocated across the cytoplasmic membrane), and thus conserves the redox energy in a proton gradient. The sequence is that of NADH-quinone oxidoreductase subunit K from Trichlorobacter lovleyi (strain ATCC BAA-1151 / DSM 17278 / SZ) (Geobacter lovleyi).